A 347-amino-acid chain; its full sequence is Monopolin complex subunit LRS4 (347 aa).

A coiled-coil region spans residues 46-118 (KKVVDETLFL…QISVDKHNKE (73 aa)). Over residues 112 to 130 (VDKHNKERTPSTGRDEQQR) the composition is skewed to basic and acidic residues. Disordered regions lie at residues 112-183 (VDKH…SLLS) and 208-230 (RNDT…LQKS). 2 stretches are compositionally biased toward polar residues: residues 131–140 (NSKAAHTSKP) and 155–172 (NNQT…PTSQ). 2 positions are modified to phosphoserine: S168 and S230.

In terms of assembly, component of the monopolin complex composed of at least CSM1, LRS4 and MAM1. The complex associates with the kinetochore. In terms of processing, phosphorylated by CDC5. This phosphorylation is required for the location to the kinetochores during late pachytene.

It is found in the nucleus. It localises to the nucleolus. The protein resides in the chromosome. Its subcellular location is the centromere. Its function is as follows. Component of the monopolin complex which promotes monoorientation during meiosis I, required for chromosome segregation during meiosis. Involved in rDNA silencing. The protein is Monopolin complex subunit LRS4 (LRS4) of Saccharomyces cerevisiae (strain ATCC 204508 / S288c) (Baker's yeast).